The primary structure comprises 932 residues: Protein translocase subunit SecA (932 aa).

Residues glutamine 90, 108–112, and aspartate 498 each bind ATP; that span reads GEGKT.

This sequence belongs to the SecA family. In terms of assembly, monomer and homodimer. Part of the essential Sec protein translocation apparatus which comprises SecA, SecYEG and auxiliary proteins SecDF. Other proteins may also be involved.

It localises to the cell inner membrane. It is found in the cellular thylakoid membrane. Its subcellular location is the cytoplasm. The enzyme catalyses ATP + H2O + cellular proteinSide 1 = ADP + phosphate + cellular proteinSide 2.. In terms of biological role, part of the Sec protein translocase complex. Interacts with the SecYEG preprotein conducting channel. Has a central role in coupling the hydrolysis of ATP to the transfer of proteins into and across the cell membrane, serving as an ATP-driven molecular motor driving the stepwise translocation of polypeptide chains across the membrane. Its function is as follows. Probably participates in protein translocation into and across both the cytoplasmic and thylakoid membranes in cyanobacterial cells. This chain is Protein translocase subunit SecA, found in Synechocystis sp. (strain ATCC 27184 / PCC 6803 / Kazusa).